We begin with the raw amino-acid sequence, 159 residues long: Small ribosomal subunit protein bS16 (159 aa).

Positions 102–119 (GIPEAAEEAPATESVAEA) are enriched in low complexity. The segment at 102-159 (GIPEAAEEAPATESVAEAEVADVPESELSEAATETAAAELSPPEAEVEKPQVEEAVEA) is disordered. Residues 120–129 (EVADVPESEL) show a composition bias toward acidic residues. Residues 130-145 (SEAATETAAAELSPPE) show a composition bias toward low complexity.

Belongs to the bacterial ribosomal protein bS16 family.

In Synechococcus sp. (strain JA-2-3B'a(2-13)) (Cyanobacteria bacterium Yellowstone B-Prime), this protein is Small ribosomal subunit protein bS16.